Reading from the N-terminus, the 170-residue chain is Fimbrial protein (170 aa).

Positions 1-7 are cleaved as a propeptide — leader sequence; that stretch reads MNTLQKG. Phe8 bears the N-methylphenylalanine mark. A helical membrane pass occupies residues 8–28; it reads FTLIELMIVIAIVGILAAVAL. O-linked (Gal...) serine glycosylation is present at Ser70. Residue Ser100 is modified to O-(sn-1-glycerophosphoryl)serine. Cys127 and Cys163 are oxidised to a cystine.

Belongs to the N-Me-Phe pilin family. The pili are polar flexible filaments of about 5.4 nanometers diameter and 2.5 micrometers average length; they consist of only a single polypeptide chain arranged in a helical configuration of five subunits per turn in the assembled pilus. Post-translationally, O-linked glycan has been reported to consist either of the Gal(alpha1-3) GlcNAc disaccharide, or the Gal(beta 1-4) Gal(alpha 1-3) 2,4-diacetamido-2,4,6-trideoxyhexose trisaccharide.

The protein resides in the fimbrium. The protein localises to the membrane. In terms of biological role, major component of the type IV pilus (T4P) that plays a role in cellular adherence, microcolony formation as well as twitching motility. This Neisseria meningitidis serogroup B (strain ATCC BAA-335 / MC58) protein is Fimbrial protein (pilE).